A 115-amino-acid polypeptide reads, in one-letter code: Large ribosomal subunit protein bL19 (115 aa).

This sequence belongs to the bacterial ribosomal protein bL19 family.

This protein is located at the 30S-50S ribosomal subunit interface and may play a role in the structure and function of the aminoacyl-tRNA binding site. This Tropheryma whipplei (strain TW08/27) (Whipple's bacillus) protein is Large ribosomal subunit protein bL19.